A 448-amino-acid polypeptide reads, in one-letter code: Probable glycine dehydrogenase (decarboxylating) subunit 1 (448 aa).

Belongs to the GcvP family. N-terminal subunit subfamily. In terms of assembly, the glycine cleavage system is composed of four proteins: P, T, L and H. In this organism, the P 'protein' is a heterodimer of two subunits.

The catalysed reaction is N(6)-[(R)-lipoyl]-L-lysyl-[glycine-cleavage complex H protein] + glycine + H(+) = N(6)-[(R)-S(8)-aminomethyldihydrolipoyl]-L-lysyl-[glycine-cleavage complex H protein] + CO2. Its function is as follows. The glycine cleavage system catalyzes the degradation of glycine. The P protein binds the alpha-amino group of glycine through its pyridoxal phosphate cofactor; CO(2) is released and the remaining methylamine moiety is then transferred to the lipoamide cofactor of the H protein. This chain is Probable glycine dehydrogenase (decarboxylating) subunit 1, found in Listeria monocytogenes serotype 4a (strain HCC23).